The chain runs to 249 residues: Bis(5'-nucleosyl)-tetraphosphatase PrpE [asymmetrical] (249 aa).

The protein belongs to the PrpE family. Ni(2+) serves as cofactor.

The enzyme catalyses P(1),P(4)-bis(5'-guanosyl) tetraphosphate + H2O = GMP + GTP + 2 H(+). Functionally, asymmetrically hydrolyzes Ap4p to yield AMP and ATP. The chain is Bis(5'-nucleosyl)-tetraphosphatase PrpE [asymmetrical] from Bacillus velezensis (strain DSM 23117 / BGSC 10A6 / LMG 26770 / FZB42) (Bacillus amyloliquefaciens subsp. plantarum).